The sequence spans 383 residues: MTDSLSPTLELAVELIKRPSVTPHDAGCQELLSQRLQTIGFEITDLPFGEVQNFWARRGSQAPLVVFAGHTDVVPTGPEEKWEHPPFAAEVKDGVLHGRGAADMKGSLAAFMTACERFVKKHPNHRGSIGWLITSDEEGHAVNGTVKVVEYLVDKGEVIDWCIVGEPSSTHTVGDVIKNGRRGSIGATLIVKGVQGHVAYPHLADNPIHKAAPALAELANEKWDEGNAFFPATSLQISNINGGTGATNVIPGELNIMFNLRFSTELNADVIKQRSEAILQKHGLDYDIEWRLYGEPFLTSKGPLIEATQKAIKHVRGSDTTLSTSGGTSDGRFIAPTGAQVVELGPCNATIHRINEQVLVSEIDQLSSIYEHILEELLVVGSE.

H70 is a binding site for Zn(2+). The active site involves D72. A Zn(2+)-binding site is contributed by D103. The active-site Proton acceptor is the E137. 3 residues coordinate Zn(2+): E138, E166, and H352.

Belongs to the peptidase M20A family. DapE subfamily. In terms of assembly, homodimer. Zn(2+) is required as a cofactor. Co(2+) serves as cofactor.

It catalyses the reaction N-succinyl-(2S,6S)-2,6-diaminopimelate + H2O = (2S,6S)-2,6-diaminopimelate + succinate. Its pathway is amino-acid biosynthesis; L-lysine biosynthesis via DAP pathway; LL-2,6-diaminopimelate from (S)-tetrahydrodipicolinate (succinylase route): step 3/3. In terms of biological role, catalyzes the hydrolysis of N-succinyl-L,L-diaminopimelic acid (SDAP), forming succinate and LL-2,6-diaminopimelate (DAP), an intermediate involved in the bacterial biosynthesis of lysine and meso-diaminopimelic acid, an essential component of bacterial cell walls. The chain is Succinyl-diaminopimelate desuccinylase from Hahella chejuensis (strain KCTC 2396).